Consider the following 510-residue polypeptide: UDP-N-acetylmuramoyl-tripeptide--D-alanyl-D-alanine ligase (510 aa).

136–142 serves as a coordination point for ATP; that stretch reads GSSGKTS.

Belongs to the MurCDEF family. MurF subfamily.

It is found in the cytoplasm. It catalyses the reaction D-alanyl-D-alanine + UDP-N-acetyl-alpha-D-muramoyl-L-alanyl-gamma-D-glutamyl-meso-2,6-diaminopimelate + ATP = UDP-N-acetyl-alpha-D-muramoyl-L-alanyl-gamma-D-glutamyl-meso-2,6-diaminopimeloyl-D-alanyl-D-alanine + ADP + phosphate + H(+). It participates in cell wall biogenesis; peptidoglycan biosynthesis. Functionally, involved in cell wall formation. Catalyzes the final step in the synthesis of UDP-N-acetylmuramoyl-pentapeptide, the precursor of murein. The sequence is that of UDP-N-acetylmuramoyl-tripeptide--D-alanyl-D-alanine ligase from Mycobacterium bovis (strain ATCC BAA-935 / AF2122/97).